The following is a 1322-amino-acid chain: WD repeat-containing protein 17 (1322 aa).

WD repeat units follow at residues 81-121, 123-164, 171-211, 221-261, and 266-307; these read EHKK…VIAK, DSTK…SGVI, SFLS…QKHV, DEED…CITT, and SAAA…PIDN. The segment at 328-352 is disordered; it reads KFSVQSPTKNHYTSSTSEAVPPPTL. Residues 330–345 are compositionally biased toward polar residues; sequence SVQSPTKNHYTSSTSE. 7 WD repeats span residues 391 to 431, 434 to 474, 478 to 518, 519 to 559, 564 to 604, 607 to 647, and 650 to 690; these read GHVE…AVYT, GNEG…IIQR, HGTN…LHKY, KHPA…DQPL, GHTA…CINI, GHTA…CVDT, and DHGA…TPVQ.

In Homo sapiens (Human), this protein is WD repeat-containing protein 17 (WDR17).